The following is a 357-amino-acid chain: Peptide chain release factor 1 (357 aa).

At Q236 the chain carries N5-methylglutamine. The segment covering 283 to 309 (ERRKKDQERANNRREQIGSGDRSERIR) has biased composition (basic and acidic residues). Residues 283-313 (ERRKKDQERANNRREQIGSGDRSERIRTYNF) form a disordered region.

Belongs to the prokaryotic/mitochondrial release factor family. In terms of processing, methylated by PrmC. Methylation increases the termination efficiency of RF1.

The protein localises to the cytoplasm. Its function is as follows. Peptide chain release factor 1 directs the termination of translation in response to the peptide chain termination codons UAG and UAA. This Rickettsia bellii (strain OSU 85-389) protein is Peptide chain release factor 1.